Reading from the N-terminus, the 344-residue chain is MQNLWKNALDTLSPYISNLFDNDVVCINNERYRIQKLLGEGGFAFVYLVQNVSNEKLYALKKIKCSFGNKGIKKAMKEADYHRKFKSNYLLKSYTHQLVKEADGSEFVYILFPYFAKGSVAQVIRNCDIEGSYISEKRILVWCSCLCKALQYLHENVAGDSPKQPEVNDLIMFDEPQVPQNTSNNNLVSYIHGDIKPDNLLLHENSREIVLTDFGSICLVPIFASNNSEAIAIQDKASENCTMPFRAPELFHVKAGSTITEKADIWSFGCTLYTIMFHASPFEREVSQGGSLALAVCNAQYSFPRKHPYSTLLCEIVEACLQREPNKRPSARELLSKIDLQINQ.

ATP is bound by residues 38-46 and Lys61; that span reads LGEGGFAFV. One can recognise a Protein kinase domain in the interval 76–344; it reads MKEADYHRKF…LSKIDLQINQ (269 aa). Catalysis depends on His192, which acts as the Proton acceptor.

It belongs to the protein kinase superfamily. Ser/Thr protein kinase family.

The protein resides in the endoplasmic reticulum. It is found in the golgi apparatus. It catalyses the reaction L-seryl-[protein] + ATP = O-phospho-L-seryl-[protein] + ADP + H(+). The enzyme catalyses L-threonyl-[protein] + ATP = O-phospho-L-threonyl-[protein] + ADP + H(+). This is Serine/threonine-protein kinase ppk13 (ppk13) from Schizosaccharomyces pombe (strain 972 / ATCC 24843) (Fission yeast).